A 178-amino-acid chain; its full sequence is Phosphopantetheine adenylyltransferase (178 aa).

S8 is a binding site for substrate. ATP is bound by residues 8-9 (SF) and H16. Substrate-binding residues include K40, T72, and R86. ATP contacts are provided by residues 87–89 (GLR), E97, and 122–128 (YSFLSSS).

It belongs to the bacterial CoaD family. Homohexamer. Mg(2+) serves as cofactor.

The protein localises to the cytoplasm. It catalyses the reaction (R)-4'-phosphopantetheine + ATP + H(+) = 3'-dephospho-CoA + diphosphate. It functions in the pathway cofactor biosynthesis; coenzyme A biosynthesis; CoA from (R)-pantothenate: step 4/5. Reversibly transfers an adenylyl group from ATP to 4'-phosphopantetheine, yielding dephospho-CoA (dPCoA) and pyrophosphate. The chain is Phosphopantetheine adenylyltransferase from Picosynechococcus sp. (strain ATCC 27264 / PCC 7002 / PR-6) (Agmenellum quadruplicatum).